Consider the following 326-residue polypeptide: Putative ankyrin repeat protein L25 (326 aa).

ANK repeat units lie at residues 11 to 40, 42 to 65, 66 to 95, 96 to 125, 127 to 154, 155 to 184, 185 to 214, 216 to 244, 246 to 274, and 275 to 304; these read RSEYPLRWASTEGHVEVVIYLVENGADLNV, KLFYVDKYLQVVKYLIENGSNIHV, DDEFTLIYASKGGYLELVNLLIKNGADIHV, NDDAPLKWASKNGHLEVVKYLVENGADIHA, NELVVYASEGGHLQIVKYLVKKGADIHA, EDDEALKWASRSGHLEVVKYLVEKGANFRA, ENDYALRWACEKGHLEIVKYLVEKGADIHA, DEYALRWASRSGHLEVVKYLVENGADIHA, NDYGLRKASRNRHLNVVKYLMENGANIHA, and KDDYALRLASVNGHFKLVKFLVENGANIHA.

The polypeptide is Putative ankyrin repeat protein L25 (Acanthamoeba polyphaga mimivirus (APMV)).